We begin with the raw amino-acid sequence, 1987 residues long: Transcriptional activator DEMETER (1987 aa).

3 disordered regions span residues 246 to 378 (TGHE…NKSP), 392 to 415 (DLEN…SSGA), and 793 to 901 (MPPE…GPSG). Residues 258–277 (SMQSIMDSSAVNATEATEQN) are compositionally biased toward polar residues. Over residues 341–364 (ATQEKVKSKETGSAKKKNLKESAT) the composition is skewed to basic and acidic residues. A compositionally biased stretch (polar residues) spans 813-829 (NTASISKGASKGNSSPV). Residues 844–855 (PAKKGRAGRKKS) show a composition bias toward basic residues. The segment at 955-1054 (KVDIDDETTR…AFMSLAARFP (100 aa)) is DEMETER. 2 disordered regions span residues 1324–1351 (LPGM…QDEM) and 1439–1471 (TLAD…KNNM). Composition is skewed to basic and acidic residues over residues 1338 to 1351 (EHQD…QDEM) and 1452 to 1469 (SLRK…RNKN). [4Fe-4S] cluster is bound by residues Cys-1629, Cys-1636, Cys-1639, and Cys-1645.

Belongs to the DNA glycosylase family. DEMETER subfamily. The cofactor is [4Fe-4S] cluster. Mainly expressed in immature flower buds, then decreases as the flower matures. Expressed in the ovule carpels, but not expressed in pollen stamens. Expressed in developing and mature ovules (stages 12-14), then strongly decreases after fertilization.

Its subcellular location is the nucleus. In terms of biological role, transcriptional activator involved in gene imprinting. Catalyzes the release of 5-methylcytosine (5-meC) from DNA by a glycosylase/lyase mechanism. Allows the expression of the maternal copy of the imprinted MEA gene before fertilization, possibly by antagonizing or suppressing DNA methylation on target promoter. Probably acts by nicking the MEA promoter. Required for stable reproducible patterns of floral and vegetative development. The protein is Transcriptional activator DEMETER (DME) of Arabidopsis thaliana (Mouse-ear cress).